We begin with the raw amino-acid sequence, 176 residues long: 2-C-methyl-D-erythritol 2,4-cyclodiphosphate synthase (176 aa).

Aspartate 23, histidine 25, and histidine 60 together coordinate a divalent metal cation. 23–25 (DSH) is a binding site for 4-CDP-2-C-methyl-D-erythritol 2-phosphate. 4-CDP-2-C-methyl-D-erythritol 2-phosphate is bound at residue 149 to 152 (TSGE).

This sequence belongs to the IspF family. As to quaternary structure, homotrimer. It depends on a divalent metal cation as a cofactor.

The catalysed reaction is 4-CDP-2-C-methyl-D-erythritol 2-phosphate = 2-C-methyl-D-erythritol 2,4-cyclic diphosphate + CMP. Its pathway is isoprenoid biosynthesis; isopentenyl diphosphate biosynthesis via DXP pathway; isopentenyl diphosphate from 1-deoxy-D-xylulose 5-phosphate: step 4/6. Its function is as follows. Involved in the biosynthesis of isopentenyl diphosphate (IPP) and dimethylallyl diphosphate (DMAPP), two major building blocks of isoprenoid compounds. Catalyzes the conversion of 4-diphosphocytidyl-2-C-methyl-D-erythritol 2-phosphate (CDP-ME2P) to 2-C-methyl-D-erythritol 2,4-cyclodiphosphate (ME-CPP) with a corresponding release of cytidine 5-monophosphate (CMP). This chain is 2-C-methyl-D-erythritol 2,4-cyclodiphosphate synthase, found in Chlamydia felis (strain Fe/C-56) (Chlamydophila felis).